A 322-amino-acid polypeptide reads, in one-letter code: MSPNFKLQCHFILIFLTALRGESRYLELREAADYDPFLLFSANLKRELAGEQPYRRALRCLDMLSLQGQFTFTADRPQLHCAAFFISEPEEFITIHYDQVSIDCQGGDFLKVFDGWILKGEKFPSSQDHPLPSAERYIDFCESGLSRRSIRSSQNVAMIFFRVHEPGNGFTLTIKTDPNLFPCNVISQTPNGKFTLVVPHQHRNCSFSIIYPVVIKISDLTLGHVNGLQLKKSSAGCEGIGDFVELLGGTGLDPSKMTPLADLCYPFHGPAQMKVGCDNTVVRMVSSGKHVNRVTFEYRQLEPYELENPNGNSIGEFCLSGL.

Positions 1 to 24 are cleaved as a signal peptide; that stretch reads MSPNFKLQCHFILIFLTALRGESR. 5 disulfides stabilise this stretch: Cys-60–Cys-81, Cys-104–Cys-141, Cys-183–Cys-205, Cys-237–Cys-264, and Cys-277–Cys-318. N-linked (GlcNAc...) asparagine glycosylation occurs at Asn-204.

This sequence belongs to the CRF-binding protein family.

The protein localises to the secreted. Binds CRF and inactivates it. May prevent inappropriate pituitary-adrenal stimulation in pregnancy. This chain is Corticotropin-releasing factor-binding protein (CRHBP), found in Homo sapiens (Human).